Here is a 527-residue protein sequence, read N- to C-terminus: MPHGAEREASPAEESAGTRPLTGEEYLESLRDAREVYLDGSRVKDVTAHPAFHNPARMTARLYDSLHDPAQKAVLTAPTDAGDGFTHRFFTAPRSVDDLVKDQAAIASWARKSYGWMGRSPDYKASFLGTLGANADFYEPFADNARRWYRESQEKVLYWNHAFLHPPVDRSLPADEVGDVFIHVERETDAGLVVSGAKVVATGSALTHAAFISHWGLPIKDRKFALVATVPMDADGLKVICRPSYSANAATTGSPFDNPLSSRLDENDAILVLDQVLIPWENVFVYGNLGKVHLLAGQSGMIERATFHGCTRLAVKLEFIAGLLAKALDITGAKDFRGVQTRLGEVLAWRNLFWSLSDAAARNPVPWKNGTLLPNPQAGMAYRWFMQIGYPRVLEIVQQDVASGLMYVNSSTEDFRNPETGPYLEKYLRGSDGAGAVERVKVMKLLWDAVGSDFGGRHELYERNYSGNHENTRIELLLSQTASGKLDSYMDFAQACMDEYDLDGWTAPDLESFHAMRSASRDLLGGL.

Over residues 1–10 (MPHGAEREAS) the composition is skewed to basic and acidic residues. Residues 1–22 (MPHGAEREASPAEESAGTRPLT) are disordered. Residues 161-163 (HAF), 167-170 (PVDR), and threonine 202 contribute to the FAD site.

The protein belongs to the FADH(2)-utilizing monooxygenase family. In terms of assembly, homotetramer.

It catalyses the reaction (3S)-3-amino-3-(3-chloro-4-hydroxyphenyl)propanoyl-[SgcC2 peptidyl-carrier protein] + FADH2 + O2 = (3S)-3-amino-3-(3-chloro-4,5-dihydroxyphenyl)propanoyl-[SgcC2 peptidyl-carrier protein] + FAD + H2O + H(+). Its pathway is antibiotic biosynthesis. Its activity is regulated as follows. The SgcE6-SgcC hydroxylation activity decreases in the presence of excess FAD. In terms of biological role, oxygenase component of a two-component system involved in the biosynthesis of the enediyne antitumor antibiotic C-1027. Uses FADH(2) supplied by SgcE6 to catalyze the C-5 hydroxylation of (S)-3-chloro-beta-tyrosyl-S-SgcC2. Can also efficiently catalyze the regioselective hydroxylation of other 3-substituted beta-tyrosyl-S-SgcC2 analogs, including the bromo-, iodo-, fluoro-, and methyl-substituted analogs, but does not accept 3-hydroxy-beta-tyrosyl-S-SgcC2 as a substrate. Is only active with SgcC2 (peptidyl carrier protein)-tethered substrates. The polypeptide is (3S)-3-amino-3-(3-chloro-4-hydroxyphenyl)propanoyl-[peptidyl-carrier protein SgcC2] monooxygenase (Streptomyces globisporus).